Consider the following 149-residue polypeptide: Nucleoside diphosphate kinase (149 aa).

The ATP site is built by lysine 9, phenylalanine 57, arginine 85, threonine 91, arginine 102, and asparagine 112. The active-site Pros-phosphohistidine intermediate is histidine 115.

This sequence belongs to the NDK family. In terms of assembly, homotetramer. It depends on Mg(2+) as a cofactor.

The protein localises to the cytoplasm. The enzyme catalyses a 2'-deoxyribonucleoside 5'-diphosphate + ATP = a 2'-deoxyribonucleoside 5'-triphosphate + ADP. It catalyses the reaction a ribonucleoside 5'-diphosphate + ATP = a ribonucleoside 5'-triphosphate + ADP. Its function is as follows. Major role in the synthesis of nucleoside triphosphates other than ATP. The ATP gamma phosphate is transferred to the NDP beta phosphate via a ping-pong mechanism, using a phosphorylated active-site intermediate. The polypeptide is Nucleoside diphosphate kinase (Staphylococcus epidermidis (strain ATCC 35984 / DSM 28319 / BCRC 17069 / CCUG 31568 / BM 3577 / RP62A)).